A 240-amino-acid polypeptide reads, in one-letter code: UPF0309 protein in nagA 3'region (240 aa).

Positions 31–206 constitute an SIS domain; it reads IVKRLVQGGI…CAQIIEILHE (176 aa).

Belongs to the UPF0309 family.

This chain is UPF0309 protein in nagA 3'region, found in Lysinibacillus sphaericus (Bacillus sphaericus).